The following is a 236-amino-acid chain: MKKKLYEGSSKILYSAEEDFLLIMAFSDKAVLETGETVDISGKGVLNNNISSFLMDKLEMIGIENHLIEKINMREQLIQYVEVFPIQVIISSVACGRFVKEFGMDEGYVFDKPIIDFKVRSREFNYPIVNEYQISNFGWLTMDEIRIVKAQTLRIYDFLSGLFIGIGIRLVECKLEFGRVFNGEESIIMLTDEISPDNCRLWHINSNEKLGFELIQNEPNKAFESYQLIANRLKEK.

It belongs to the SAICAR synthetase family.

The catalysed reaction is 5-amino-1-(5-phospho-D-ribosyl)imidazole-4-carboxylate + L-aspartate + ATP = (2S)-2-[5-amino-1-(5-phospho-beta-D-ribosyl)imidazole-4-carboxamido]succinate + ADP + phosphate + 2 H(+). It functions in the pathway purine metabolism; IMP biosynthesis via de novo pathway; 5-amino-1-(5-phospho-D-ribosyl)imidazole-4-carboxamide from 5-amino-1-(5-phospho-D-ribosyl)imidazole-4-carboxylate: step 1/2. This is Phosphoribosylaminoimidazole-succinocarboxamide synthase (purC) from Rickettsia prowazekii (strain Madrid E).